The sequence spans 169 residues: SsrA-binding protein (169 aa).

Belongs to the SmpB family.

It localises to the cytoplasm. Its function is as follows. Required for rescue of stalled ribosomes mediated by trans-translation. Binds to transfer-messenger RNA (tmRNA), required for stable association of tmRNA with ribosomes. tmRNA and SmpB together mimic tRNA shape, replacing the anticodon stem-loop with SmpB. tmRNA is encoded by the ssrA gene; the 2 termini fold to resemble tRNA(Ala) and it encodes a 'tag peptide', a short internal open reading frame. During trans-translation Ala-aminoacylated tmRNA acts like a tRNA, entering the A-site of stalled ribosomes, displacing the stalled mRNA. The ribosome then switches to translate the ORF on the tmRNA; the nascent peptide is terminated with the 'tag peptide' encoded by the tmRNA and targeted for degradation. The ribosome is freed to recommence translation, which seems to be the essential function of trans-translation. This is SsrA-binding protein from Mycolicibacterium paratuberculosis (strain ATCC BAA-968 / K-10) (Mycobacterium paratuberculosis).